The primary structure comprises 435 residues: Ribosomal protein uS12 methylthiotransferase RimO (435 aa).

The MTTase N-terminal domain maps to 3 to 113; that stretch reads HKVGFVSLGC…VVNAVHQYLP (111 aa). 6 residues coordinate [4Fe-4S] cluster: cysteine 12, cysteine 48, cysteine 77, cysteine 144, cysteine 148, and cysteine 151. The 238-residue stretch at 130 to 367 folds into the Radical SAM core domain; it reads LTPRHYAYLK…MQVQAEISRN (238 aa). The 66-residue stretch at 370 to 435 folds into the TRAM domain; that stretch reads KNKIGSTQTV…DDYDLYASLV (66 aa).

The protein belongs to the methylthiotransferase family. RimO subfamily. Requires [4Fe-4S] cluster as cofactor.

It localises to the cytoplasm. It carries out the reaction L-aspartate(89)-[ribosomal protein uS12]-hydrogen + (sulfur carrier)-SH + AH2 + 2 S-adenosyl-L-methionine = 3-methylsulfanyl-L-aspartate(89)-[ribosomal protein uS12]-hydrogen + (sulfur carrier)-H + 5'-deoxyadenosine + L-methionine + A + S-adenosyl-L-homocysteine + 2 H(+). In terms of biological role, catalyzes the methylthiolation of an aspartic acid residue of ribosomal protein uS12. This chain is Ribosomal protein uS12 methylthiotransferase RimO, found in Legionella pneumophila subsp. pneumophila (strain Philadelphia 1 / ATCC 33152 / DSM 7513).